Here is a 542-residue protein sequence, read N- to C-terminus: Glucans biosynthesis protein D (542 aa).

Positions 1–31 (MHRRNLLKASMAIAAYTGLSATGLLASRAWA) form a signal peptide, tat-type signal.

The protein belongs to the OpgD/OpgG family. Post-translationally, predicted to be exported by the Tat system. The position of the signal peptide cleavage has not been experimentally proven.

The protein localises to the periplasm. It participates in glycan metabolism; osmoregulated periplasmic glucan (OPG) biosynthesis. Probably involved in the control of the structural glucose backbone of osmoregulated periplasmic glucans (OPGs). In Pseudomonas fluorescens (strain Pf0-1), this protein is Glucans biosynthesis protein D.